The chain runs to 82 residues: RNA-binding protein Hfq (82 aa).

Residues 10 to 70 form the Sm domain; it reads DTFLNHVRKN…ISTIMPAQPV (61 aa).

It belongs to the Hfq family. Homohexamer.

Its function is as follows. RNA chaperone that binds small regulatory RNA (sRNAs) and mRNAs to facilitate mRNA translational regulation in response to envelope stress, environmental stress and changes in metabolite concentrations. Also binds with high specificity to tRNAs. The protein is RNA-binding protein Hfq of Parvibaculum lavamentivorans (strain DS-1 / DSM 13023 / NCIMB 13966).